Reading from the N-terminus, the 137-residue chain is Profilin-3 (137 aa).

This sequence belongs to the profilin family. As to quaternary structure, interacts with ACTRT3. Detected in round spermatids.

It localises to the cytoplasm. The protein resides in the cytoskeleton. The protein localises to the nucleus. In terms of biological role, binds to actin and affects the structure of the cytoskeleton. Slightly reduces actin polymerization. Binds to poly-L-proline, phosphatidylinositol 3-phosphate (PtdIns(3)P), phosphatidylinositol 4,5-bisphosphate (PtdIns(4,5)P2), and phosphatidylinositol 4-phosphate (PtdIns(4)P). May be involved in spermatogenesis. This is Profilin-3 (Pfn3) from Rattus norvegicus (Rat).